The sequence spans 909 residues: DNA mismatch repair protein MutS (909 aa).

Residues 275-290 (QKAERPPLSRPEREEQ) are compositionally biased toward basic and acidic residues. Residues 275–295 (QKAERPPLSRPEREEQGSTLF) form a disordered region. 661 to 668 (GPNMGGKS) contributes to the ATP binding site.

The protein belongs to the DNA mismatch repair MutS family.

Its function is as follows. This protein is involved in the repair of mismatches in DNA. It is possible that it carries out the mismatch recognition step. This protein has a weak ATPase activity. This is DNA mismatch repair protein MutS from Mesorhizobium japonicum (strain LMG 29417 / CECT 9101 / MAFF 303099) (Mesorhizobium loti (strain MAFF 303099)).